Reading from the N-terminus, the 917-residue chain is MATNFLTKIFGSRNDRLLKQYRKTVARINAMEPDYEKLSDEALRGKTQEFKDRIAQGESLDALLPEAFAVVREGSKRIMKMRHFDVQLVGGMALHYGKIAEMRTGEGKTLTATLPVYLNALSGQGVHVVTVNDYLAGRDAQWMGRLYNFLGLTVGINLPQMPREEKQAAYQADITYGTNNEYGFDYLRDNMVYDARERVQRGLNYAIVDEVDSILIDEARTPLIISGQAEDHTALYVAMNKVVPLLVRQEGEADPRTGEGVTKPGDFTLDEKTHQVFLTEQGHENAERILASQGLIPEGASLYDPANITLVHHLYAALRANHLYHRDQHYVVQNGEIVIVDEFTGRLMAGRRWSEGLHQAVEAKEGVNIQAENQTLASITFQNYFRLYNKLSGMTGTADTEAYEFQEIYGLETVVIPPNRPSKRDDQLDRVYKTTREKYEAAIADIRECHERGQPVLVGTTSIENSEIIDELLNKAGLPHQVLNAKQHAREADIVAQAGRPGMITIATNMAGRGTDIVLGGNVEKAIAALEADESLSEAERAARVQELRAQWKLDHEKVTALGGLRIIATERHESRRIDNQLRGRSGRQGDPGSSRFYLSLDDQLMRIFAGDRVKAIMDRLKMPDGEAIEAGIVTRSIESAQRKVEARNFDIRKQLLEYDDVANDQRKVIYQQRNEILDAPDLGVLIDAMRDDCLADVVRQYVPAESVEEQWDLAGLEKALANDWQVSLALQKEVEGSDAITDEEILEKVQQAAREAFLAKVGQVGAENFTQFERMVLLQSFDTNWRDHLSALDYLRQGIHLRGYAQKQPKQEYKREAFELFRQLIDQVKNEVTRLMMTVQVQSSAQLDEATQAMEDRGEGISNVTYSSPTETGEVETVADAATAAQPAAAGVRVGRNDPCPCGSGKKYKQCHGKLA.

ATP is bound by residues Gln87, 105–109, and Asp516; that span reads GEGKT. Residues Cys901, Cys903, Cys912, and His913 each coordinate Zn(2+).

Belongs to the SecA family. Monomer and homodimer. Part of the essential Sec protein translocation apparatus which comprises SecA, SecYEG and auxiliary proteins SecDF-YajC and YidC. The cofactor is Zn(2+).

Its subcellular location is the cell inner membrane. It is found in the cytoplasm. The catalysed reaction is ATP + H2O + cellular proteinSide 1 = ADP + phosphate + cellular proteinSide 2.. Part of the Sec protein translocase complex. Interacts with the SecYEG preprotein conducting channel. Has a central role in coupling the hydrolysis of ATP to the transfer of proteins into and across the cell membrane, serving both as a receptor for the preprotein-SecB complex and as an ATP-driven molecular motor driving the stepwise translocation of polypeptide chains across the membrane. This is Protein translocase subunit SecA from Acidovorax ebreus (strain TPSY) (Diaphorobacter sp. (strain TPSY)).